A 242-amino-acid polypeptide reads, in one-letter code: Glucosamine-6-phosphate deaminase (242 aa).

Catalysis depends on aspartate 67, which acts as the Proton acceptor; for enolization step. The For ring-opening step role is filled by asparagine 136. Histidine 138 functions as the Proton acceptor; for ring-opening step in the catalytic mechanism. Catalysis depends on glutamate 143, which acts as the For ring-opening step.

This sequence belongs to the glucosamine/galactosamine-6-phosphate isomerase family. NagB subfamily.

The enzyme catalyses alpha-D-glucosamine 6-phosphate + H2O = beta-D-fructose 6-phosphate + NH4(+). Its pathway is amino-sugar metabolism; N-acetylneuraminate degradation; D-fructose 6-phosphate from N-acetylneuraminate: step 5/5. In terms of biological role, catalyzes the reversible isomerization-deamination of glucosamine 6-phosphate (GlcN6P) to form fructose 6-phosphate (Fru6P) and ammonium ion. The polypeptide is Glucosamine-6-phosphate deaminase (Clostridium beijerinckii (strain ATCC 51743 / NCIMB 8052) (Clostridium acetobutylicum)).